The following is a 118-amino-acid chain: Ribonuclease P protein component (118 aa).

It belongs to the RnpA family. As to quaternary structure, consists of a catalytic RNA component (M1 or rnpB) and a protein subunit.

The catalysed reaction is Endonucleolytic cleavage of RNA, removing 5'-extranucleotides from tRNA precursor.. Functionally, RNaseP catalyzes the removal of the 5'-leader sequence from pre-tRNA to produce the mature 5'-terminus. It can also cleave other RNA substrates such as 4.5S RNA. The protein component plays an auxiliary but essential role in vivo by binding to the 5'-leader sequence and broadening the substrate specificity of the ribozyme. The sequence is that of Ribonuclease P protein component from Vibrio campbellii (strain ATCC BAA-1116).